We begin with the raw amino-acid sequence, 132 residues long: L-ectoine synthase (132 aa).

This sequence belongs to the ectoine synthase family.

The catalysed reaction is (2S)-4-acetamido-2-aminobutanoate = L-ectoine + H2O. It functions in the pathway amine and polyamine biosynthesis; ectoine biosynthesis; L-ectoine from L-aspartate 4-semialdehyde: step 3/3. Functionally, catalyzes the circularization of gamma-N-acetyl-alpha,gamma-diaminobutyric acid (ADABA) to ectoine (1,4,5,6-tetrahydro-2-methyl-4-pyrimidine carboxylic acid), which is an excellent osmoprotectant. This Hahella chejuensis (strain KCTC 2396) protein is L-ectoine synthase.